A 177-amino-acid polypeptide reads, in one-letter code: Ribosome maturation factor RimM (177 aa).

Residues 98–177 (DDGYYWKDLM…TIEVDWDPGF (80 aa)) form the PRC barrel domain.

Belongs to the RimM family. As to quaternary structure, binds ribosomal protein uS19.

The protein localises to the cytoplasm. An accessory protein needed during the final step in the assembly of 30S ribosomal subunit, possibly for assembly of the head region. Essential for efficient processing of 16S rRNA. May be needed both before and after RbfA during the maturation of 16S rRNA. It has affinity for free ribosomal 30S subunits but not for 70S ribosomes. This Enterobacter sp. (strain 638) protein is Ribosome maturation factor RimM.